The sequence spans 186 residues: ATP synthase subunit delta (186 aa).

The protein belongs to the ATPase delta chain family. F-type ATPases have 2 components, F(1) - the catalytic core - and F(0) - the membrane proton channel. F(1) has five subunits: alpha(3), beta(3), gamma(1), delta(1), epsilon(1). CF(0) has four main subunits: a(1), b(1), b'(1) and c(10-14). The alpha and beta chains form an alternating ring which encloses part of the gamma chain. F(1) is attached to F(0) by a central stalk formed by the gamma and epsilon chains, while a peripheral stalk is formed by the delta, b and b' chains.

Its subcellular location is the cell inner membrane. In terms of biological role, f(1)F(0) ATP synthase produces ATP from ADP in the presence of a proton or sodium gradient. F-type ATPases consist of two structural domains, F(1) containing the extramembraneous catalytic core and F(0) containing the membrane proton channel, linked together by a central stalk and a peripheral stalk. During catalysis, ATP synthesis in the catalytic domain of F(1) is coupled via a rotary mechanism of the central stalk subunits to proton translocation. Its function is as follows. This protein is part of the stalk that links CF(0) to CF(1). It either transmits conformational changes from CF(0) to CF(1) or is implicated in proton conduction. The sequence is that of ATP synthase subunit delta from Dinoroseobacter shibae (strain DSM 16493 / NCIMB 14021 / DFL 12).